Reading from the N-terminus, the 151-residue chain is Aspartate carbamoyltransferase regulatory chain (151 aa).

Residues C108, C113, C136, and C139 each contribute to the Zn(2+) site.

It belongs to the PyrI family. Contains catalytic and regulatory chains. It depends on Zn(2+) as a cofactor.

Involved in allosteric regulation of aspartate carbamoyltransferase. The polypeptide is Aspartate carbamoyltransferase regulatory chain (Porphyromonas gingivalis (strain ATCC 33277 / DSM 20709 / CIP 103683 / JCM 12257 / NCTC 11834 / 2561)).